A 462-amino-acid chain; its full sequence is Serine--tRNA ligase, cytoplasmic (462 aa).

K241 participates in a covalent cross-link: Glycyl lysine isopeptide (Lys-Gly) (interchain with G-Cter in URM1). 246 to 248 (TSE) contributes to the L-serine binding site. Residues 279 to 281 (RRE) and V295 each bind ATP. Residue E302 participates in L-serine binding. Residues K350 and K351 each participate in a glycyl lysine isopeptide (Lys-Gly) (interchain with G-Cter in URM1) cross-link. Position 366-369 (366-369 (ELVS)) interacts with ATP. 2 positions are modified to cysteine persulfide: C373 and C400. T404 provides a ligand contact to L-serine.

This sequence belongs to the class-II aminoacyl-tRNA synthetase family. Type-1 seryl-tRNA synthetase subfamily. As to quaternary structure, homodimer; the tRNA molecule probably binds across the dimer. Interacts with ABP140; interaction is required for the tRNA N(3)-methylcytidine methyltransferase activity of ABP140. Post-translationally, conjugated to URM1, a ubiquitin-like protein, in response to oxidative stresses. The attachment of URM1 to lysine residues exclusively depends on the presence of a peroxidatic cysteine in the target protein, with low specificity for the particular residue, motif, or structural context at which urmylation can occur. The URM1-conjugation reaction is mechanistically and directly coupled to the process of cysteine persulfidation, transfering the sulfur atom of the URM1 thiocarboxyl group to redox-active cysteine residues in the target protein if it is exposed to oxidative conditions. Persulfidated on specific redox-active cysteine residues. Persulfidation (also called protein S-sulfhydration) may provide a molecular mechanism that enables cells to protect vulnerable cysteine residues from reactive oxygen species (ROS) under stress conditions.

The protein localises to the cytoplasm. It localises to the cytosol. The catalysed reaction is tRNA(Ser) + L-serine + ATP = L-seryl-tRNA(Ser) + AMP + diphosphate + H(+). Catalyzes the attachment of serine to tRNA(Ser) in a two-step reaction: serine is first activated by ATP to form Ser-AMP and then transferred to the acceptor end of tRNA(Ser). This is Serine--tRNA ligase, cytoplasmic (SES1) from Saccharomyces cerevisiae (strain ATCC 204508 / S288c) (Baker's yeast).